Here is a 170-residue protein sequence, read N- to C-terminus: Crossover junction endodeoxyribonuclease RuvC (170 aa).

Catalysis depends on residues Asp-9, Glu-70, and Asp-145. 3 residues coordinate Mg(2+): Asp-9, Glu-70, and Asp-145.

Belongs to the RuvC family. In terms of assembly, homodimer which binds Holliday junction (HJ) DNA. The HJ becomes 2-fold symmetrical on binding to RuvC with unstacked arms; it has a different conformation from HJ DNA in complex with RuvA. In the full resolvosome a probable DNA-RuvA(4)-RuvB(12)-RuvC(2) complex forms which resolves the HJ. The cofactor is Mg(2+).

The protein resides in the cytoplasm. It catalyses the reaction Endonucleolytic cleavage at a junction such as a reciprocal single-stranded crossover between two homologous DNA duplexes (Holliday junction).. Its function is as follows. The RuvA-RuvB-RuvC complex processes Holliday junction (HJ) DNA during genetic recombination and DNA repair. Endonuclease that resolves HJ intermediates. Cleaves cruciform DNA by making single-stranded nicks across the HJ at symmetrical positions within the homologous arms, yielding a 5'-phosphate and a 3'-hydroxyl group; requires a central core of homology in the junction. The consensus cleavage sequence is 5'-(A/T)TT(C/G)-3'. Cleavage occurs on the 3'-side of the TT dinucleotide at the point of strand exchange. HJ branch migration catalyzed by RuvA-RuvB allows RuvC to scan DNA until it finds its consensus sequence, where it cleaves and resolves the cruciform DNA. In Chlamydia muridarum (strain MoPn / Nigg), this protein is Crossover junction endodeoxyribonuclease RuvC.